Here is a 968-residue protein sequence, read N- to C-terminus: uncharacterized protein (968 aa).

The N-terminal stretch at methionine 1–alanine 27 is a signal peptide. The 266-residue stretch at glycine 703–tryptophan 968 folds into the Autotransporter domain.

This is an uncharacterized protein from Escherichia coli (strain K12).